Here is an 805-residue protein sequence, read N- to C-terminus: Mediator of RNA polymerase II transcription subunit 25 (805 aa).

2 disordered regions span residues 430–455 (GSAQNTQNSAPSSFTSTAPSMSGQTV) and 786–805 (SQSQGSSQGLPITPGGGFMN). Composition is skewed to low complexity over residues 438–451 (SAPSSFTSTAPSMS) and 786–795 (SQSQGSSQGL).

The protein belongs to the Mediator complex subunit 25 family. Interacts with MYC2 (via N-terminus). MED25 competes with JAZ7 for binding to MYC2.

Functionally, component of the Mediator complex, a coactivator involved in the regulated transcription of nearly all RNA polymerase II-dependent genes. Mediator functions as a bridge to convey information from gene-specific regulatory proteins to the basal RNA polymerase II transcription machinery. Mediator is recruited to promoters by direct interactions with regulatory proteins and serves as a scaffold for the assembly of a functional pre-initiation complex with RNA polymerase II and the general transcription factors. Plays a positive role in wound-induced activation of jasmonate-responsive genes whose promoters are targeted by MYC2. This chain is Mediator of RNA polymerase II transcription subunit 25, found in Solanum lycopersicum (Tomato).